A 298-amino-acid chain; its full sequence is ATP synthase gamma chain (298 aa).

It belongs to the ATPase gamma chain family. As to quaternary structure, F-type ATPases have 2 components, CF(1) - the catalytic core - and CF(0) - the membrane proton channel. CF(1) has five subunits: alpha(3), beta(3), gamma(1), delta(1), epsilon(1). CF(0) has three main subunits: a, b and c.

It is found in the cell membrane. Produces ATP from ADP in the presence of a proton gradient across the membrane. The gamma chain is believed to be important in regulating ATPase activity and the flow of protons through the CF(0) complex. The chain is ATP synthase gamma chain from Frankia casuarinae (strain DSM 45818 / CECT 9043 / HFP020203 / CcI3).